Here is a 252-residue protein sequence, read N- to C-terminus: Auxin-induced in root cultures protein 12 (252 aa).

Residues 1 to 25 (MASSSSSLLILAVACFVSLISPAIS) form the signal peptide. One can recognise a DOMON domain in the interval 49 to 165 (LNSYLHYTYN…DSVNQVWQIG (117 aa)). N-linked (GlcNAc...) asparagine glycans are attached at residues N58 and N61. Position 91 (M91) interacts with heme. Residues N114 and N167 are each glycosylated (N-linked (GlcNAc...) asparagine). A heme-binding site is contributed by H176. Residues 193 to 224 (EDAAPGSAPSPGSAPAPGTSGSTTPGTAAGGP) form a disordered region. A compositionally biased stretch (low complexity) spans 195–219 (AAPGSAPSPGSAPAPGTSGSTTPGT). N226 carries GPI-anchor amidated asparagine lipidation. The propeptide at 227 to 252 (AGSLTRNVNFGVNLGILVLLGSIFIF) is removed in mature form.

The cofactor is heme.

It localises to the cell membrane. In terms of biological role, one-heme-containing cytochrome. The sequence is that of Auxin-induced in root cultures protein 12 (AIR12) from Arabidopsis thaliana (Mouse-ear cress).